A 479-amino-acid chain; its full sequence is MNAAVMTSPTNFSDYVIADLSLSAWGDKEIRIAETEMPGLMAIREEFAAAQPLKGARITGSIHMTIQTAVLIQTLEALGAKVRWASCNIYSTQDHAAAAIAAAGTPVFAVKGETLDDYWEYTHRIFEWPNDDKGAPVYSNMILDDGGDATLLLHLGTRAEKDASVLNNPGSEEEICLFNSIKKHLAVDATWYSKRLPQILGVTEETTTGVHRLYQMHKEGKLAFPAINVNDSVTKSKFDNLYGCRESLVDGIKRATDVMIAGKVAVIAGYGDVGKGSAQAMRALSAQVWVTEIDPICALQAAMEGYRVVTMEYAAEHGDIFVTCTGNYHVITHEHMKKMKDQAIVCNIGHFDNEIEVAALKQYTWENIKPQVDHIIFPDGKRIILLAEGRLVNLGCGTGHPSYVMSSSFANQTIAQIELYANTKNYPVGVYTLPKHLDEKVARLQLKKLNAQLTTLTTEQANYIGVQQTGPYKPEHYRY.

Residues threonine 65, aspartate 145, and glutamate 205 each contribute to the substrate site. 206-208 (TTT) is a binding site for NAD(+). Lysine 235 and aspartate 239 together coordinate substrate. NAD(+) is bound by residues asparagine 240, 269–274 (GYGDVG), glutamate 292, asparagine 327, 348–350 (IGH), and asparagine 393.

It belongs to the adenosylhomocysteinase family. It depends on NAD(+) as a cofactor.

It localises to the cytoplasm. It catalyses the reaction S-adenosyl-L-homocysteine + H2O = L-homocysteine + adenosine. It participates in amino-acid biosynthesis; L-homocysteine biosynthesis; L-homocysteine from S-adenosyl-L-homocysteine: step 1/1. Functionally, may play a key role in the regulation of the intracellular concentration of adenosylhomocysteine. The sequence is that of Adenosylhomocysteinase from Janthinobacterium sp. (strain Marseille) (Minibacterium massiliensis).